The primary structure comprises 255 residues: Ditrans,polycis-undecaprenyl-diphosphate synthase ((2E,6E)-farnesyl-diphosphate specific) (255 aa).

The active site involves D21. D21 is a Mg(2+) binding site. Residues 22–25, W26, R34, H38, and 66–68 contribute to the substrate site; these read GNGR and SSE. N69 acts as the Proton acceptor in catalysis. Residues W70, R72, R189, and 195 to 197 each bind substrate; that span reads RIS. Mg(2+) is bound at residue E208.

This sequence belongs to the UPP synthase family. Homodimer. It depends on Mg(2+) as a cofactor.

It catalyses the reaction 8 isopentenyl diphosphate + (2E,6E)-farnesyl diphosphate = di-trans,octa-cis-undecaprenyl diphosphate + 8 diphosphate. In terms of biological role, catalyzes the sequential condensation of isopentenyl diphosphate (IPP) with (2E,6E)-farnesyl diphosphate (E,E-FPP) to yield (2Z,6Z,10Z,14Z,18Z,22Z,26Z,30Z,34E,38E)-undecaprenyl diphosphate (di-trans,octa-cis-UPP). UPP is the precursor of glycosyl carrier lipid in the biosynthesis of bacterial cell wall polysaccharide components such as peptidoglycan and lipopolysaccharide. The protein is Ditrans,polycis-undecaprenyl-diphosphate synthase ((2E,6E)-farnesyl-diphosphate specific) of Xylella fastidiosa (strain 9a5c).